A 653-amino-acid chain; its full sequence is Probable potassium transport system protein Kup (653 aa).

12 helical membrane-spanning segments follow: residues 37-57 (ALLALGALGIVYGDIGTSPLY), 79-99 (VLSLIFWSLIIVVSVKYLLLV), 134-154 (ITLGIFGAALLYGDGIITPAI), 168-188 (AVFDPYVIPIALVILVALFLV), 196-216 (IGAVFGPVMCIWFLTLAGLGV), 243-263 (LHGFLVLGGVFLVVTGCEALY), 278-298 (WFSMVLPALMLNYLGQGALLL), 320-340 (LVALATVAGVIASQALIAGVF), 368-388 (IYLPGLNWALLVGVVALVLGF), 397-417 (AYGIAVSTAMVITTLMAYVVA), 426-446 (WVAIPVVGLFLSVELAFFGAN), and 450-470 (VADGGWFPLLMAVVVFTLMTT).

The protein belongs to the HAK/KUP transporter (TC 2.A.72) family.

The protein resides in the cell inner membrane. The catalysed reaction is K(+)(in) + H(+)(in) = K(+)(out) + H(+)(out). Transport of potassium into the cell. Likely operates as a K(+):H(+) symporter. The chain is Probable potassium transport system protein Kup from Myxococcus xanthus (strain DK1622).